The following is an 88-amino-acid chain: UPF0298 protein BA_4142/GBAA_4142/BAS3844 (88 aa).

The protein belongs to the UPF0298 family.

The protein resides in the cytoplasm. The chain is UPF0298 protein BA_4142/GBAA_4142/BAS3844 from Bacillus anthracis.